The chain runs to 624 residues: MAENGEEKLLAVARHIAKTLGHNESMADDILQIFSNFDGRFSREKLAEGQAGEDGSGVATLERALNSIDGQISRFVAADQPIWADPADSAAFLDTIDELVAIIREWSPMASEKPIGICLTRADDMMQQAMFRIEEEFRSLMERGAESFGLNPQGDAGAMNHRFDSEEEEDDDRDFNNGDDIQIPVAQPLTDYDLIIDALPSATINDLHEMAKRMLGAGFGKACSHVYSSCRREFLEESMSRLGLQKLSIEEVHKMPWQELEDEIDRWIKAANVALRILFPSERRLCDRVFFGFSSAADLSFMEVCRGSTIQLLNFADAIAIGSRSPERLFKVLDVFETMRDLMPEFESVFSDQFCSVLRNEAVTIWKRLGEAIRGIFMELENLIRRDPAKAAVPGGGLHPITRYVMNYLRAACRSRQTLEQVFEESNGVPSKDSTLLTVQMSWIMELLESNLEVKSKVYKDPALCYVFLMNNGRYIVQKVKDGDLGLLLGDDWIRKHNVKVKQYHMNYQRSSWNKMLGLLKVDNTAAGMNGLGKTMKEKLKQFNIQFDEICKVHSTWVVFDEQLKEELKISLARLLVPAYGSFIGRFQNLGDIGKNADKYIKYGVEDIEARINELFKGTTTGRK.

The interval 148 to 176 (FGLNPQGDAGAMNHRFDSEEEEDDDRDFN) is disordered.

Belongs to the EXO70 family. Interacts with EXO70B2, SEC5A and EXO84B. Binds to PUB18. Binds directly to B1L at the plasma membrane and in small vesicles. Target of the E3 ubiquitin-protein ligase PUB18 that mediates its ubiquitination and degradation via the 26S proteasome.

The protein localises to the cytoplasmic vesicle. It localises to the phagosome. The protein resides in the endomembrane system. It is found in the cell membrane. Its subcellular location is the vesicle. Component of an exocyst subcomplex specifically involved in autophagy-related, Golgi-independent membrane traffic to the vacuole. Regulates autophagosome formation and autophagy-related Golgi-independent import into the vacuole. Positive regulator of both abscisic acid (ABA)-promoted and mannitol (drought)-promoted stomatal closure. Involved in the regulation of lateral root formation. The sequence is that of Exocyst complex component EXO70B1 from Arabidopsis thaliana (Mouse-ear cress).